The primary structure comprises 381 residues: Probable serine/threonine-protein kinase PBL21 (381 aa).

Residue Cys3 is the site of S-palmitoyl cysteine attachment. Residues 78–354 (FREVNLLGEG…GDIVVALEYL (277 aa)) enclose the Protein kinase domain. ATP is bound by residues 84 to 92 (LGEGGFGRV) and Lys106. Asp204 (proton acceptor) is an active-site residue. A disordered region spans residues 362-381 (EARNVSSPSPEISRTPRRDL).

Belongs to the protein kinase superfamily. Ser/Thr protein kinase family. In terms of processing, palmitoylation at Cys-3 and Cys-7 are required for plasma membrane location.

The protein localises to the cell membrane. It carries out the reaction L-seryl-[protein] + ATP = O-phospho-L-seryl-[protein] + ADP + H(+). The enzyme catalyses L-threonyl-[protein] + ATP = O-phospho-L-threonyl-[protein] + ADP + H(+). May be involved in plant defense signaling. This is Probable serine/threonine-protein kinase PBL21 from Arabidopsis thaliana (Mouse-ear cress).